Here is a 663-residue protein sequence, read N- to C-terminus: Transforming growth factor beta activator LRRC32 (663 aa).

Residues 1–17 (MSHQILLLLAMLTLGLA) form the signal peptide. Residues 18–628 (ISQRREQVPC…CEKGGLKNVN (611 aa)) lie on the Extracellular side of the membrane. One can recognise an LRRNT domain in the interval 22-49 (REQVPCRTVNKEALCHGLGLLQVPSVLS). LRR repeat units follow at residues 49-72 (SLDI…PLGF), 73-96 (YTAL…VFQA), 98-123 (PYLE…GLGR), 125-148 (PLLV…LLGE), 149-172 (TPRL…TFWG), 174-196 (PAVE…AFEA), 197-220 (LPHL…SLQQ), 222-241 (QVLD…PEPQ), 243-267 (QFQL…VFPR), and 269-287 (IYLN…LPRG). N-linked (GlcNAc...) asparagine glycosylation occurs at N204. 3 N-linked (GlcNAc...) asparagine glycosylation sites follow: N272, N305, and N309. The disordered stretch occupies residues 291–311 (LHAPSEGWSASPLSNPSRNAS). Polar residues predominate over residues 301-311 (SPLSNPSRNAS). LRR repeat units follow at residues 315–338 (LSQL…FLEH), 340–362 (TSLR…QVDS), 363–386 (LPCL…TKVL), 387–409 (GSLQ…TFAS), 411–433 (ASLQ…AEPG), 443–466 (IPTL…SFLH), 468–489 (PLTE…ALVG), 491–514 (EASL…LPCF), 515–539 (LRLK…AVSL), 541–559 (VLDL…AMGG), and 561–584 (ETSL…WLAA). N-linked (GlcNAc...) asparagine glycosylation occurs at N346. Residue N546 is glycosylated (N-linked (GlcNAc...) asparagine). Positions 572 to 621 (NPLSCCGNGWLAAQLHQGRVDVDATQDLICRFGSQEELSLSLVRPEDCEK) constitute an LRRCT domain. A helical transmembrane segment spans residues 629 to 649 (LILLLSFTLVSAIVLTTLATI). At 650–663 (CFLRRQKLSQQYKA) the chain is on the cytoplasmic side.

The protein belongs to the LRRC32/LRRC33 family. As to quaternary structure, interacts with TGFB1; associates via disulfide bonds with the Latency-associated peptide chain (LAP) regulatory chain of TGFB1, leading to regulate activation of TGF-beta-1. Interacts with TGFB2. Interacts with TGFB3; associates via disulfide bonds with the Latency-associated peptide chain (LAP) regulatory chain of TGFB3, leading to regulate activation of TGF-beta-3. Interacts with LAPTM4B; decreases TGFB1 production in regulatory T-cells. In terms of tissue distribution, present in medial edge epithelial cells at 14.5 dpc (at protein level).

It is found in the cell membrane. The protein localises to the cell surface. Key regulator of transforming growth factor beta (TGFB1, TGFB2 and TGFB3) that controls TGF-beta activation by maintaining it in a latent state during storage in extracellular space. Associates specifically via disulfide bonds with the Latency-associated peptide (LAP), which is the regulatory chain of TGF-beta, and regulates integrin-dependent activation of TGF-beta. Able to outcompete LTBP1 for binding to LAP regulatory chain of TGF-beta. Controls activation of TGF-beta-1 (TGFB1) on the surface of activated regulatory T-cells (Tregs). Required for epithelial fusion during palate development by regulating activation of TGF-beta-3 (TGFB3). The protein is Transforming growth factor beta activator LRRC32 of Mus musculus (Mouse).